The primary structure comprises 135 residues: Ribonuclease P protein component (135 aa).

Belongs to the RnpA family. In terms of assembly, consists of a catalytic RNA component (M1 or rnpB) and a protein subunit.

It carries out the reaction Endonucleolytic cleavage of RNA, removing 5'-extranucleotides from tRNA precursor.. Its function is as follows. RNaseP catalyzes the removal of the 5'-leader sequence from pre-tRNA to produce the mature 5'-terminus. It can also cleave other RNA substrates such as 4.5S RNA. The protein component plays an auxiliary but essential role in vivo by binding to the 5'-leader sequence and broadening the substrate specificity of the ribozyme. In Saccharophagus degradans (strain 2-40 / ATCC 43961 / DSM 17024), this protein is Ribonuclease P protein component.